We begin with the raw amino-acid sequence, 282 residues long: Tetraspanin-6 (282 aa).

Topologically, residues Met-1–Thr-7 are cytoplasmic. The helical transmembrane segment at Val-8–Leu-28 threads the bilayer. Residues Tyr-29–Pro-44 are Extracellular-facing. The helical transmembrane segment at Leu-45–Phe-65 threads the bilayer. Topologically, residues Asn-66–Tyr-74 are cytoplasmic. A helical transmembrane segment spans residues Leu-75–Val-95. The Extracellular segment spans residues Thr-96 to Ser-220. The chain crosses the membrane as a helical span at residues Val-221–Phe-241. Topologically, residues His-242–Tyr-282 are cytoplasmic.

Belongs to the tetraspanin (TM4SF) family.

Its subcellular location is the membrane. In terms of biological role, may be involved in the regulation of cell differentiation. The polypeptide is Tetraspanin-6 (TET6) (Arabidopsis thaliana (Mouse-ear cress)).